Consider the following 691-residue polypeptide: Proprotein convertase subtilisin/kexin type 9 (691 aa).

The first 30 residues, 1-30 (MGIRCSTWLRWPLSPQLLLLLLLCPTGSRA), serve as a signal peptide directing secretion. A propeptide spanning residues 31 to 151 (QDEDGDYEEL…IEEDSLVFAQ (121 aa)) is cleaved from the precursor. Y37 is subject to Sulfotyrosine. S46 is subject to Phosphoserine. The Peptidase S8 domain maps to 154 to 441 (PWNLERIIPA…QRVLTPNRVA (288 aa)). Active-site charge relay system residues include D185 and H225. 2 disulfide bridges follow: C222–C254 and C322–C357. S385 (charge relay system) is an active-site residue. The tract at residues 449-691 (ETGGQLLCRT…PSAKASWVHQ (243 aa)) is C-terminal domain. Cystine bridges form between C456/C526, C476/C525, and C485/C508. The Cell attachment site motif lies at 495–497 (RGD). N532 carries an N-linked (GlcNAc...) asparagine glycan. 6 cysteine pairs are disulfide-bonded: C533/C600, C551/C599, C561/C587, C607/C678, C625/C677, and C634/C653. Position 687 is a phosphoserine (S687).

It belongs to the peptidase S8 family. In terms of assembly, monomer. Can self-associate to form dimers and higher multimers which may have increased LDLR degrading activity. The precursor protein but not the mature protein may form multimers. Interacts with APOB, VLDLR, LRP8/APOER2 and BACE1. The full-length immature form (pro-PCSK9) interacts with SCNN1A, SCNN1B and SCNN1G. The pro-PCSK9 form (via C-terminal domain) interacts with LDLR. Interacts (via the C-terminal domain) with ANXA2 (via repeat Annexin 1); the interaction inhibits the degradation of LDLR. Requires Ca(2+) as cofactor. Cleavage by furin and PCSK5 generates a truncated inactive protein that is unable to induce LDLR degradation. Post-translationally, undergoes autocatalytic cleavage in the endoplasmic reticulum to release the propeptide from the N-terminus and the cleavage of the propeptide is strictly required for its maturation and activation. The cleaved propeptide however remains associated with the catalytic domain through non-covalent interactions, preventing potential substrates from accessing its active site. As a result, it is secreted from cells as a propeptide-containing, enzymatically inactive protein. In terms of processing, phosphorylation protects the propeptide against proteolysis. In terms of tissue distribution, highly expressed in 12-day embryo. In the adult, strongly expressed in liver, small intestine, jejunum, and to a lesser extent in kidney, lung, spleen and thymus. Expression in the liver is up-regulated following partial hepatectomy.

The protein resides in the cytoplasm. The protein localises to the secreted. It is found in the endosome. It localises to the lysosome. Its subcellular location is the cell surface. The protein resides in the endoplasmic reticulum. The protein localises to the golgi apparatus. Its activity is regulated as follows. Its proteolytic activity is autoinhibited by the non-covalent binding of the propeptide to the catalytic domain. Inhibited by EGTA. Its function is as follows. Crucial player in the regulation of plasma cholesterol homeostasis. Binds to low-density lipid receptor family members: low density lipoprotein receptor (LDLR), very low density lipoprotein receptor (VLDLR), apolipoprotein E receptor (LRP1/APOER) and apolipoprotein receptor 2 (LRP8/APOER2), and promotes their degradation in intracellular acidic compartments. Acts via a non-proteolytic mechanism to enhance the degradation of the hepatic LDLR through a clathrin LDLRAP1/ARH-mediated pathway. May prevent the recycling of LDLR from endosomes to the cell surface or direct it to lysosomes for degradation. Can induce ubiquitination of LDLR leading to its subsequent degradation. Inhibits intracellular degradation of APOB via the autophagosome/lysosome pathway in a LDLR-independent manner. Involved in the disposal of non-acetylated intermediates of BACE1 in the early secretory pathway. Inhibits epithelial Na(+) channel (ENaC)-mediated Na(+) absorption by reducing ENaC surface expression primarily by increasing its proteasomal degradation. Regulates neuronal apoptosis via modulation of LRP8/APOER2 levels and related anti-apoptotic signaling pathways. The polypeptide is Proprotein convertase subtilisin/kexin type 9 (Pcsk9) (Rattus norvegicus (Rat)).